The chain runs to 584 residues: Kelch domain-containing protein 4 (584 aa).

Residues 1 to 10 (MGKKGKKEKK) are compositionally biased toward basic residues. Disordered regions lie at residues 1 to 33 (MGKKGKKEKKGRGAEKTAAKMEKKVSKRSRKEE) and 50 to 69 (KTQVTETPCPPPSPRLNASL). The segment covering 11–24 (GRGAEKTAAKMEKK) has biased composition (basic and acidic residues). Kelch repeat units lie at residues 77 to 129 (ELIL…VVPQ), 133 to 187 (QLWV…AWKR), 188 to 238 (QLIL…LMAV), 243 to 289 (SIAI…INPS), and 308 to 361 (QILV…RRGK). Disordered stretches follow at residues 348–381 (KGPKSEKKKRRRGKAEDPEGTTEQETGGSSAPEP), 405–433 (SGLGVQPSPKADDSASEASSTGQEPCPRS), and 482–533 (PKSQ…EQFE). Serine 418 is subject to Phosphoserine. The Kelch 6 repeat unit spans residues 443-494 (LLYVYGGMFEAGDRQVTLSDLYCLDLHKMEEWKTLVEMDPKSQEWLEESDSE). The span at 487 to 519 (WLEESDSEEDSSSDEESEDGEDKDQEDSAEEGA) shows a compositional bias: acidic residues. Residues 520–533 (DPQHPEVARGEQFE) show a composition bias toward basic and acidic residues.

In Mus musculus (Mouse), this protein is Kelch domain-containing protein 4 (Klhdc4).